Consider the following 109-residue polypeptide: T cell receptor alpha variable 26-1 (109 aa).

An N-terminal signal peptide occupies residues 1-19 (MRLVARVTVFLTFGTIIDA). Residues 20–109 (KTTQPTSMDC…TAVYYCIVRV (90 aa)) enclose the Ig-like domain. Residues Cys39 and Cys105 are joined by a disulfide bond. N-linked (GlcNAc...) asparagine glycans are attached at residues Asn40 and Asn71.

As to quaternary structure, alpha-beta TR is a heterodimer composed of an alpha and beta chain; disulfide-linked. The alpha-beta TR is associated with the transmembrane signaling CD3 coreceptor proteins to form the TR-CD3 (TcR or TCR). The assembly of alpha-beta TR heterodimers with CD3 occurs in the endoplasmic reticulum where a single alpha-beta TR heterodimer associates with one CD3D-CD3E heterodimer, one CD3G-CD3E heterodimer and one CD247 homodimer forming a stable octameric structure. CD3D-CD3E and CD3G-CD3E heterodimers preferentially associate with TR alpha and TR beta chains, respectively. The association of the CD247 homodimer is the last step of TcR assembly in the endoplasmic reticulum and is required for transport to the cell surface.

The protein resides in the cell membrane. Its function is as follows. V region of the variable domain of T cell receptor (TR) alpha chain that participates in the antigen recognition. Alpha-beta T cell receptors are antigen specific receptors which are essential to the immune response and are present on the cell surface of T lymphocytes. Recognize peptide-major histocompatibility (MH) (pMH) complexes that are displayed by antigen presenting cells (APC), a prerequisite for efficient T cell adaptive immunity against pathogens. Binding of alpha-beta TR to pMH complex initiates TR-CD3 clustering on the cell surface and intracellular activation of LCK that phosphorylates the ITAM motifs of CD3G, CD3D, CD3E and CD247 enabling the recruitment of ZAP70. In turn ZAP70 phosphorylates LAT, which recruits numerous signaling molecules to form the LAT signalosome. The LAT signalosome propagates signal branching to three major signaling pathways, the calcium, the mitogen-activated protein kinase (MAPK) kinase and the nuclear factor NF-kappa-B (NF-kB) pathways, leading to the mobilization of transcription factors that are critical for gene expression and essential for T cell growth and differentiation. The T cell repertoire is generated in the thymus, by V-(D)-J rearrangement. This repertoire is then shaped by intrathymic selection events to generate a peripheral T cell pool of self-MH restricted, non-autoaggressive T cells. Post-thymic interaction of alpha-beta TR with the pMH complexes shapes TR structural and functional avidity. The protein is T cell receptor alpha variable 26-1 of Homo sapiens (Human).